The following is a 1196-amino-acid chain: Nucleolar protein 6 (1196 aa).

2 disordered regions span residues 1 to 75 (MPGK…VKPP) and 1140 to 1196 (KREQ…KALK). Over residues 22-31 (HAEDHSDLEH) the composition is skewed to basic and acidic residues. The span at 1165–1174 (KPKKHRKRKG) shows a compositional bias: basic residues.

The protein belongs to the NRAP family. As to quaternary structure, part of the small subunit (SSU) processome, composed of more than 70 proteins and the RNA chaperone small nucleolar RNA (snoRNA) U3.

It localises to the nucleus. The protein localises to the nucleolus. The protein resides in the chromosome. Its function is as follows. Part of the small subunit (SSU) processome, first precursor of the small eukaryotic ribosomal subunit. During the assembly of the SSU processome in the nucleolus, many ribosome biogenesis factors, an RNA chaperone and ribosomal proteins associate with the nascent pre-rRNA and work in concert to generate RNA folding, modifications, rearrangements and cleavage as well as targeted degradation of pre-ribosomal RNA by the RNA exosome. In Drosophila sechellia (Fruit fly), this protein is Nucleolar protein 6.